The primary structure comprises 164 residues: HTH-type transcriptional regulator IscR (164 aa).

Positions 2–131 constitute an HTH rrf2-type domain; sequence RLTSKGRYAV…SSISLEELVN (130 aa). A DNA-binding region (H-T-H motif) is located at residues 28–51; sequence LADISERQGISLSYLEQLFSRLRK. [2Fe-2S] cluster is bound by residues cysteine 92, cysteine 98, and cysteine 104. The segment at 141–164 is disordered; that stretch reads RQDNDKRRAPNGRAQETINVNLRP. A compositionally biased stretch (polar residues) spans 154–164; that stretch reads AQETINVNLRP.

It depends on [2Fe-2S] cluster as a cofactor.

Regulates the transcription of several operons and genes involved in the biogenesis of Fe-S clusters and Fe-S-containing proteins. The chain is HTH-type transcriptional regulator IscR from Photorhabdus laumondii subsp. laumondii (strain DSM 15139 / CIP 105565 / TT01) (Photorhabdus luminescens subsp. laumondii).